The following is a 211-amino-acid chain: Thiamine-phosphate synthase (211 aa).

4-amino-2-methyl-5-(diphosphooxymethyl)pyrimidine contacts are provided by residues 37–41 and asparagine 69; that span reads QLRIK. 2 residues coordinate Mg(2+): aspartate 70 and aspartate 89. Serine 108 lines the 4-amino-2-methyl-5-(diphosphooxymethyl)pyrimidine pocket. 134-136 contributes to the 2-[(2R,5Z)-2-carboxy-4-methylthiazol-5(2H)-ylidene]ethyl phosphate binding site; it reads TQT. Lysine 137 is a 4-amino-2-methyl-5-(diphosphooxymethyl)pyrimidine binding site. 2-[(2R,5Z)-2-carboxy-4-methylthiazol-5(2H)-ylidene]ethyl phosphate contacts are provided by residues glycine 166 and 186–187; that span reads VS.

This sequence belongs to the thiamine-phosphate synthase family. Requires Mg(2+) as cofactor.

The catalysed reaction is 2-[(2R,5Z)-2-carboxy-4-methylthiazol-5(2H)-ylidene]ethyl phosphate + 4-amino-2-methyl-5-(diphosphooxymethyl)pyrimidine + 2 H(+) = thiamine phosphate + CO2 + diphosphate. It catalyses the reaction 2-(2-carboxy-4-methylthiazol-5-yl)ethyl phosphate + 4-amino-2-methyl-5-(diphosphooxymethyl)pyrimidine + 2 H(+) = thiamine phosphate + CO2 + diphosphate. The enzyme catalyses 4-methyl-5-(2-phosphooxyethyl)-thiazole + 4-amino-2-methyl-5-(diphosphooxymethyl)pyrimidine + H(+) = thiamine phosphate + diphosphate. It participates in cofactor biosynthesis; thiamine diphosphate biosynthesis; thiamine phosphate from 4-amino-2-methyl-5-diphosphomethylpyrimidine and 4-methyl-5-(2-phosphoethyl)-thiazole: step 1/1. Functionally, condenses 4-methyl-5-(beta-hydroxyethyl)thiazole monophosphate (THZ-P) and 2-methyl-4-amino-5-hydroxymethyl pyrimidine pyrophosphate (HMP-PP) to form thiamine monophosphate (TMP). The chain is Thiamine-phosphate synthase from Escherichia coli O6:H1 (strain CFT073 / ATCC 700928 / UPEC).